Reading from the N-terminus, the 294-residue chain is Bifunctional protein FolD (294 aa).

NADP(+) contacts are provided by residues 166–168 (GRS), S191, and I232.

This sequence belongs to the tetrahydrofolate dehydrogenase/cyclohydrolase family. Homodimer.

It carries out the reaction (6R)-5,10-methylene-5,6,7,8-tetrahydrofolate + NADP(+) = (6R)-5,10-methenyltetrahydrofolate + NADPH. The catalysed reaction is (6R)-5,10-methenyltetrahydrofolate + H2O = (6R)-10-formyltetrahydrofolate + H(+). It participates in one-carbon metabolism; tetrahydrofolate interconversion. In terms of biological role, catalyzes the oxidation of 5,10-methylenetetrahydrofolate to 5,10-methenyltetrahydrofolate and then the hydrolysis of 5,10-methenyltetrahydrofolate to 10-formyltetrahydrofolate. The chain is Bifunctional protein FolD from Nitrobacter winogradskyi (strain ATCC 25391 / DSM 10237 / CIP 104748 / NCIMB 11846 / Nb-255).